The following is a 303-amino-acid chain: Phosphatidylglycerol--prolipoprotein diacylglyceryl transferase (303 aa).

4 helical membrane-spanning segments follow: residues 18–38 (LGPFSLRWYGLLIAISVLVGL), 58–78 (LLPILVLASVIGARIYYVAFE), 106–126 (IWGGGIAIHGALIMGTLSIIF), and 133–153 (EPFWDVIDVLVPSVALGQAIG). Residue R154 participates in a 1,2-diacyl-sn-glycero-3-phospho-(1'-sn-glycerol) binding. The next 3 membrane-spanning stretches (helical) occupy residues 193–213 (PTFLYESVWNIFVFGILIFLF), 223–243 (LPPGSLSCLYLITYSLGRFWI), and 266–286 (IAQLISLFLISAGLLGIWRIY).

Belongs to the Lgt family.

It localises to the cell inner membrane. It catalyses the reaction L-cysteinyl-[prolipoprotein] + a 1,2-diacyl-sn-glycero-3-phospho-(1'-sn-glycerol) = an S-1,2-diacyl-sn-glyceryl-L-cysteinyl-[prolipoprotein] + sn-glycerol 1-phosphate + H(+). The protein operates within protein modification; lipoprotein biosynthesis (diacylglyceryl transfer). Functionally, catalyzes the transfer of the diacylglyceryl group from phosphatidylglycerol to the sulfhydryl group of the N-terminal cysteine of a prolipoprotein, the first step in the formation of mature lipoproteins. This chain is Phosphatidylglycerol--prolipoprotein diacylglyceryl transferase, found in Prochlorococcus marinus (strain NATL1A).